Consider the following 573-residue polypeptide: Phosphoenolpyruvate-protein phosphotransferase (573 aa).

Histidine 190 acts as the Tele-phosphohistidine intermediate in catalysis. The phosphoenolpyruvate site is built by arginine 297 and arginine 333. Glutamate 432 and aspartate 456 together coordinate Mg(2+). Phosphoenolpyruvate-binding positions include asparagine 455–aspartate 456 and arginine 466. Residue cysteine 503 is the Proton donor of the active site.

The protein belongs to the PEP-utilizing enzyme family. Homodimer. Mg(2+) is required as a cofactor.

Its subcellular location is the cytoplasm. It carries out the reaction L-histidyl-[protein] + phosphoenolpyruvate = N(pros)-phospho-L-histidyl-[protein] + pyruvate. General (non sugar-specific) component of the phosphoenolpyruvate-dependent sugar phosphotransferase system (sugar PTS). This major carbohydrate active-transport system catalyzes the phosphorylation of incoming sugar substrates concomitantly with their translocation across the cell membrane. Enzyme I transfers the phosphoryl group from phosphoenolpyruvate (PEP) to the phosphoryl carrier protein (HPr). The chain is Phosphoenolpyruvate-protein phosphotransferase (ptsI) from Priestia megaterium (Bacillus megaterium).